The chain runs to 456 residues: Armadillo repeat-containing X-linked protein 1 (456 aa).

At 1-6 (MGRTRE) the chain is on the mitochondrial intermembrane side. Mitochondrion outer membrane (MOM)-targeting sequence regions lie at residues 1–6 (MGRTRE) and 26–36 (RLTWGKDENEK). A helical; Signal-anchor membrane pass occupies residues 7–29 (AGCVAAGMVIGAGACYCVYRLTW). Residues 30–456 (GKDENEKLWD…VKVLKVLTKL (427 aa)) lie on the Cytoplasmic side of the membrane. Disordered stretches follow at residues 37–106 (LWDE…SGGG) and 139–186 (RTLT…APAT). Residues 38-50 (WDEEEEEEEEEEE) show a composition bias toward acidic residues. Composition is skewed to basic and acidic residues over residues 51 to 62 (KSCSDKTEKELK) and 72 to 81 (KPQDDSKSKV). Over residues 162-180 (SRARNRTSGKVKRKNRSKS) the composition is skewed to basic residues. 4 ARM repeats span residues 198-238 (PYKI…NNAA), 240-279 (SFNQ…NLSV), 361-401 (PAMT…NIND), and 418-456 (SSLF…LTKL).

The protein belongs to the eutherian X-chromosome-specific Armcx family. Interacts with MIRO1. Widely expressed in the adult nervous tissue, especially in the forebrain, including the cerebral cortex, hippocampus and thalamus.

The protein resides in the mitochondrion. It is found in the mitochondrion outer membrane. In terms of biological role, regulates mitochondrial transport during axon regeneration. Increases the proportion of motile mitochondria by recruiting stationary mitochondria into the motile pool. Enhances mitochondria movement and neurite growth in both adult axons and embryonic neurons. Promotes neuronal survival and axon regeneration after nerve injury. May link mitochondria to the Trak1-kinesin motor complex via its interaction with Miro1. This chain is Armadillo repeat-containing X-linked protein 1 (Armcx1), found in Mus musculus (Mouse).